A 380-amino-acid chain; its full sequence is Cytochrome b (380 aa).

A run of 4 helical transmembrane segments spans residues Leu-33 to Met-53, Trp-77 to Ile-98, Trp-113 to Leu-133, and Phe-178 to Leu-198. His-83 and His-97 together coordinate heme b. Heme b-binding residues include His-182 and His-196. Position 201 (His-201) interacts with a ubiquinone. 4 helical membrane-spanning segments follow: residues Thr-226–Ser-246, Leu-288–His-308, Leu-320–Gly-340, and Phe-347–Pro-367.

The protein belongs to the cytochrome b family. In terms of assembly, the cytochrome bc1 complex contains 11 subunits: 3 respiratory subunits (MT-CYB, CYC1 and UQCRFS1), 2 core proteins (UQCRC1 and UQCRC2) and 6 low-molecular weight proteins (UQCRH/QCR6, UQCRB/QCR7, UQCRQ/QCR8, UQCR10/QCR9, UQCR11/QCR10 and a cleavage product of UQCRFS1). This cytochrome bc1 complex then forms a dimer. It depends on heme b as a cofactor.

It localises to the mitochondrion inner membrane. In terms of biological role, component of the ubiquinol-cytochrome c reductase complex (complex III or cytochrome b-c1 complex) that is part of the mitochondrial respiratory chain. The b-c1 complex mediates electron transfer from ubiquinol to cytochrome c. Contributes to the generation of a proton gradient across the mitochondrial membrane that is then used for ATP synthesis. The chain is Cytochrome b (MT-CYB) from Nomascus leucogenys (Northern white-cheeked gibbon).